Here is a 346-residue protein sequence, read N- to C-terminus: Membrane progestin receptor alpha (346 aa).

Residues 1–72 (MAMAQKLSHL…RTLFQQHNEA (72 aa)) lie on the Cytoplasmic side of the membrane. A helical transmembrane segment spans residues 73–93 (VNVWTHLLAALVLLLRLALFV). At 94–103 (ETVDFWGDPH) the chain is on the extracellular side. Residues 104–124 (ALPLFIIVLASFTYLSFSALA) traverse the membrane as a helical segment. Residues 125–137 (HLLQAKSEFWHYS) lie on the Cytoplasmic side of the membrane. Residues 138-158 (FFFLDYVGVAVYQFGSALAHF) traverse the membrane as a helical segment. The Extracellular portion of the chain corresponds to 159-169 (YYAIEPAWHAQ). The helical transmembrane segment at 170–190 (VQAVFLPMAAFLAWLSCIGSC) threads the bilayer. Residues 191 to 237 (YNKYIQKPGLLGRTCQEVPSVLAYALDISPVVHRIFVSSDPTTDDPA) are Cytoplasmic-facing. Residues 238 to 258 (LLYHKCQVVFFLLAAAFFSTF) form a helical membrane-spanning segment. The Extracellular portion of the chain corresponds to 259-276 (MPERWFPGSCHVFGQGHQ). Residues 277-297 (LFHIFLVLCTLAQLEAVALDY) traverse the membrane as a helical segment. Topologically, residues 298 to 316 (EARRPIYEPLHTHWPHNFS) are cytoplasmic. Residues 317–337 (GLFLLTVGSSILTAFLLSQLV) traverse the membrane as a helical segment. Residues 338–346 (QRKLDQKTK) are Extracellular-facing.

Belongs to the ADIPOR family. As to expression, expressed in a wide range of tissues including ovary, testis, placenta, uterus and bladder.

It localises to the cell membrane. Functionally, plasma membrane progesterone (P4) receptor coupled to G proteins. Seems to act through a G(i) mediated pathway. May be involved in oocyte maturation. Involved in neurosteroid inhibition of apoptosis. Also binds dehydroepiandrosterone (DHEA), pregnanolone, pregnenolone and allopregnanolone. The protein is Membrane progestin receptor alpha of Homo sapiens (Human).